We begin with the raw amino-acid sequence, 377 residues long: tRNA(Met) cytidine acetate ligase (377 aa).

Residues 7–20 (ITEY…HLYH), Gly-101, Asn-152, and Arg-179 contribute to the ATP site.

Belongs to the TmcAL family.

The protein resides in the cytoplasm. It carries out the reaction cytidine(34) in elongator tRNA(Met) + acetate + ATP = N(4)-acetylcytidine(34) in elongator tRNA(Met) + AMP + diphosphate. Its function is as follows. Catalyzes the formation of N(4)-acetylcytidine (ac(4)C) at the wobble position of elongator tRNA(Met), using acetate and ATP as substrates. First activates an acetate ion to form acetyladenylate (Ac-AMP) and then transfers the acetyl group to tRNA to form ac(4)C34. The sequence is that of tRNA(Met) cytidine acetate ligase from Oenococcus oeni (strain ATCC BAA-331 / PSU-1).